A 434-amino-acid chain; its full sequence is D-amino acid dehydrogenase (434 aa).

3–17 (VLVLGSGVIGTTSAW) serves as a coordination point for FAD.

The protein belongs to the DadA oxidoreductase family. The cofactor is FAD.

The enzyme catalyses a D-alpha-amino acid + A + H2O = a 2-oxocarboxylate + AH2 + NH4(+). It participates in amino-acid degradation; D-alanine degradation; NH(3) and pyruvate from D-alanine: step 1/1. Functionally, oxidative deamination of D-amino acids. The protein is D-amino acid dehydrogenase of Stenotrophomonas maltophilia (strain K279a).